We begin with the raw amino-acid sequence, 68 residues long: Large ribosomal subunit protein uL29 (68 aa).

The protein belongs to the universal ribosomal protein uL29 family.

The chain is Large ribosomal subunit protein uL29 from Albidiferax ferrireducens (strain ATCC BAA-621 / DSM 15236 / T118) (Rhodoferax ferrireducens).